We begin with the raw amino-acid sequence, 248 residues long: Proteasome subunit alpha (248 aa).

It belongs to the peptidase T1A family. In terms of assembly, the 20S proteasome core is composed of 14 alpha and 14 beta subunits that assemble into four stacked heptameric rings, resulting in a barrel-shaped structure. The two inner rings, each composed of seven catalytic beta subunits, are sandwiched by two outer rings, each composed of seven alpha subunits. The catalytic chamber with the active sites is on the inside of the barrel. Has a gated structure, the ends of the cylinder being occluded by the N-termini of the alpha-subunits. Is capped by the proteasome-associated ATPase, ARC.

The protein localises to the cytoplasm. Its pathway is protein degradation; proteasomal Pup-dependent pathway. Its activity is regulated as follows. The formation of the proteasomal ATPase ARC-20S proteasome complex, likely via the docking of the C-termini of ARC into the intersubunit pockets in the alpha-rings, may trigger opening of the gate for substrate entry. Interconversion between the open-gate and close-gate conformations leads to a dynamic regulation of the 20S proteasome proteolysis activity. Component of the proteasome core, a large protease complex with broad specificity involved in protein degradation. This Mycobacterium tuberculosis (strain ATCC 25177 / H37Ra) protein is Proteasome subunit alpha.